The primary structure comprises 338 residues: Solute-binding protein Rfer_1840 (338 aa).

The N-terminal stretch at 1–25 is a signal peptide; sequence MQRRQLLQSMGGLAASTMPFSLAFA. Residues Arg-47, Tyr-100, Arg-175, Ser-197, 214–218, and Glu-244 each bind malonate; that span reads TSSTS.

It belongs to the bacterial solute-binding protein 7 family. In terms of assembly, the complex is comprised of an extracytoplasmic solute-binding protein and a heteromeric permease formed by two transmembrane proteins.

The protein localises to the periplasm. Solute-binding protein that binds malonate (in vitro). Probably part of a tripartite ATP-independent periplasmic (TRAP) transport system that mediates solute transport into the cytoplasm. The sequence is that of Solute-binding protein Rfer_1840 from Albidiferax ferrireducens (strain ATCC BAA-621 / DSM 15236 / T118) (Rhodoferax ferrireducens).